A 423-amino-acid chain; its full sequence is Deferrochelatase (423 aa).

Residues 1–35 constitute a signal peptide (tat-type signal); the sequence is MQYEDENGVNEPSRRRLLKGIGALALAGSCPVAHA. Heme b contacts are provided by residues 236–238, histidine 329, 334–336, and arginine 347; these read GTA and NPR.

It belongs to the DyP-type peroxidase family. EfeB subfamily. Homodimer. Part of a ferrous iron transporter composed of EfeU, EfeO and EfeB. It depends on heme b as a cofactor. In terms of processing, predicted to be exported by the Tat system. The position of the signal peptide cleavage has not been experimentally proven.

The protein resides in the periplasm. The enzyme catalyses heme b + 2 H(+) = protoporphyrin IX + Fe(2+). Involved in the recovery of exogenous heme iron. Extracts iron from heme while preserving the protoporphyrin ring intact. The protein is Deferrochelatase (efeB) of Escherichia coli O6:K15:H31 (strain 536 / UPEC).